Reading from the N-terminus, the 55-residue chain is Probable Rubredoxin-2 (55 aa).

Residues 4–54 (MARYQCMCGWVYDEDKGEPSQNIPPGTKFEDLPDTFRCPQCGLGKNAFRKI) form the Rubredoxin-like domain. Cysteine 9, cysteine 11, cysteine 41, and cysteine 44 together coordinate Fe cation.

This sequence belongs to the rubredoxin family. Fe(3+) serves as cofactor.

Functionally, rubredoxin is a small nonheme, iron protein lacking acid-labile sulfide. Its single Fe, chelated to 4 Cys, functions as an electron acceptor and may also stabilize the conformation of the molecule. In Methanocaldococcus jannaschii (strain ATCC 43067 / DSM 2661 / JAL-1 / JCM 10045 / NBRC 100440) (Methanococcus jannaschii), this protein is Probable Rubredoxin-2.